We begin with the raw amino-acid sequence, 124 residues long: Small ribosomal subunit protein uS12 (124 aa).

The disordered stretch occupies residues 8–30; sequence IRSARQDTEKQTKSPALKSCPQR. D89 carries the post-translational modification 3-methylthioaspartic acid. Residues 103-124 form a disordered region; the sequence is DTAGVKDRKQSRSKYGAKKPKA. Basic residues predominate over residues 113 to 124; the sequence is SRSKYGAKKPKA.

This sequence belongs to the universal ribosomal protein uS12 family. Part of the 30S ribosomal subunit. Contacts proteins S8 and S17. May interact with IF1 in the 30S initiation complex.

Its function is as follows. With S4 and S5 plays an important role in translational accuracy. Functionally, interacts with and stabilizes bases of the 16S rRNA that are involved in tRNA selection in the A site and with the mRNA backbone. Located at the interface of the 30S and 50S subunits, it traverses the body of the 30S subunit contacting proteins on the other side and probably holding the rRNA structure together. The combined cluster of proteins S8, S12 and S17 appears to hold together the shoulder and platform of the 30S subunit. The protein is Small ribosomal subunit protein uS12 of Trichodesmium erythraeum (strain IMS101).